The primary structure comprises 160 residues: Transcription elongation factor GreA (160 aa).

Positions 1–71 (MAEKTYPMTL…GQISTLETKI (71 aa)) form a coiled coil.

This sequence belongs to the GreA/GreB family.

Its function is as follows. Necessary for efficient RNA polymerase transcription elongation past template-encoded arresting sites. The arresting sites in DNA have the property of trapping a certain fraction of elongating RNA polymerases that pass through, resulting in locked ternary complexes. Cleavage of the nascent transcript by cleavage factors such as GreA or GreB allows the resumption of elongation from the new 3'terminus. GreA releases sequences of 2 to 3 nucleotides. The sequence is that of Transcription elongation factor GreA from Streptococcus pyogenes serotype M3 (strain ATCC BAA-595 / MGAS315).